Here is a 315-residue protein sequence, read N- to C-terminus: Transposase for insertion sequence element IS640 (315 aa).

The 62-residue stretch at 5-66 (EDFYMIKQMR…PFMDYIDMRL (62 aa)) folds into the HTH IS21-type domain. One can recognise an Integrase catalytic domain in the interval 111 to 285 (FETQPGYQLQ…TPEQRSRWSR (175 aa)).

It belongs to the transposase IS21/IS408/IS1162 family.

In terms of biological role, involved in the transposition of the insertion sequence. The chain is Transposase for insertion sequence element IS640 (istA) from Shigella sonnei.